The following is a 196-amino-acid chain: Endonuclease V (196 aa).

2 residues coordinate Mg(2+): Asp-37 and Asp-98.

It belongs to the endonuclease V family. Mg(2+) serves as cofactor.

Its subcellular location is the cytoplasm. It catalyses the reaction Endonucleolytic cleavage at apurinic or apyrimidinic sites to products with a 5'-phosphate.. DNA repair enzyme involved in the repair of deaminated bases. Selectively cleaves double-stranded DNA at the second phosphodiester bond 3' to a deoxyinosine leaving behind the intact lesion on the nicked DNA. The sequence is that of Endonuclease V from Sulfurisphaera tokodaii (strain DSM 16993 / JCM 10545 / NBRC 100140 / 7) (Sulfolobus tokodaii).